The sequence spans 134 residues: Putative STAG3-like protein 2 (134 aa).

An SCD domain is found at 10–95 (PKVTCRDVLP…GRFKDWMVSM (86 aa)).

It belongs to the SCC3 family.

Its subcellular location is the nucleus. The polypeptide is Putative STAG3-like protein 2 (STAG3L2) (Homo sapiens (Human)).